A 161-amino-acid chain; its full sequence is Lipoprotein signal peptidase (161 aa).

3 consecutive transmembrane segments (helical) span residues 9–29, 63–83, and 88–108; these read ISLLMTIIVLVFDQVSKWLIT, KMLFFYIITIIILIVLVIFYI, and FNLFMQVAISLLFAGALGNFI. Catalysis depends on residues Asp-118 and Asp-136. Residues 131–151 form a helical membrane-spanning segment; it reads IFNIADSSLTIGVIFVIIALI.

The protein belongs to the peptidase A8 family.

It is found in the cell membrane. The catalysed reaction is Release of signal peptides from bacterial membrane prolipoproteins. Hydrolyzes -Xaa-Yaa-Zaa-|-(S,diacylglyceryl)Cys-, in which Xaa is hydrophobic (preferably Leu), and Yaa (Ala or Ser) and Zaa (Gly or Ala) have small, neutral side chains.. The protein operates within protein modification; lipoprotein biosynthesis (signal peptide cleavage). In terms of biological role, this protein specifically catalyzes the removal of signal peptides from prolipoproteins. In Staphylococcus epidermidis (strain ATCC 12228 / FDA PCI 1200), this protein is Lipoprotein signal peptidase.